We begin with the raw amino-acid sequence, 455 residues long: Argininosuccinate lyase (455 aa).

The protein belongs to the lyase 1 family. Argininosuccinate lyase subfamily.

It localises to the cytoplasm. It carries out the reaction 2-(N(omega)-L-arginino)succinate = fumarate + L-arginine. It participates in amino-acid biosynthesis; L-arginine biosynthesis; L-arginine from L-ornithine and carbamoyl phosphate: step 3/3. The chain is Argininosuccinate lyase from Caulobacter vibrioides (strain ATCC 19089 / CIP 103742 / CB 15) (Caulobacter crescentus).